The sequence spans 178 residues: Mediator of RNA polymerase II transcription subunit 30 (178 aa).

Residues 1 to 22 (MSTPPLAASGMAPGPFAGPQAQ) form a disordered region. At serine 2 the chain carries N-acetylserine. Residues 10–22 (GMAPGPFAGPQAQ) are compositionally biased toward low complexity. Coiled-coil stretches lie at residues 70–94 (TYQDRLTKLQDNLRQLSVLFRKLRL) and 133–173 (RFAS…INAM).

The protein belongs to the Mediator complex subunit 30 family. As to quaternary structure, component of the Mediator complex, which is composed of MED1, MED4, MED6, MED7, MED8, MED9, MED10, MED11, MED12, MED13, MED13L, MED14, MED15, MED16, MED17, MED18, MED19, MED20, MED21, MED22, MED23, MED24, MED25, MED26, MED27, MED29, MED30, MED31, CCNC, CDK8 and CDC2L6/CDK11. The MED12, MED13, CCNC and CDK8 subunits form a distinct module termed the CDK8 module. Mediator containing the CDK8 module is less active than Mediator lacking this module in supporting transcriptional activation. Individual preparations of the Mediator complex lacking one or more distinct subunits have been variously termed ARC, CRSP, DRIP, PC2, SMCC and TRAP. In terms of tissue distribution, expressed in brain, heart, kidney, liver, lung, pancreas, placenta and skeletal muscle.

The protein localises to the nucleus. Component of the Mediator complex, a coactivator involved in the regulated transcription of nearly all RNA polymerase II-dependent genes. Mediator functions as a bridge to convey information from gene-specific regulatory proteins to the basal RNA polymerase II transcription machinery. Mediator is recruited to promoters by direct interactions with regulatory proteins and serves as a scaffold for the assembly of a functional preinitiation complex with RNA polymerase II and the general transcription factors. The chain is Mediator of RNA polymerase II transcription subunit 30 (MED30) from Homo sapiens (Human).